The chain runs to 217 residues: Protein-L-isoaspartate O-methyltransferase (217 aa).

Ser62 is a catalytic residue.

It belongs to the methyltransferase superfamily. L-isoaspartyl/D-aspartyl protein methyltransferase family.

Its subcellular location is the cytoplasm. It carries out the reaction [protein]-L-isoaspartate + S-adenosyl-L-methionine = [protein]-L-isoaspartate alpha-methyl ester + S-adenosyl-L-homocysteine. Catalyzes the methyl esterification of L-isoaspartyl residues in peptides and proteins that result from spontaneous decomposition of normal L-aspartyl and L-asparaginyl residues. It plays a role in the repair and/or degradation of damaged proteins. This chain is Protein-L-isoaspartate O-methyltransferase, found in Trichlorobacter lovleyi (strain ATCC BAA-1151 / DSM 17278 / SZ) (Geobacter lovleyi).